Here is a 143-residue protein sequence, read N- to C-terminus: Nucleoside diphosphate kinase (143 aa).

ATP contacts are provided by Lys11, Phe59, Arg87, Thr93, Arg104, and Asn114. His117 functions as the Pros-phosphohistidine intermediate in the catalytic mechanism.

The protein belongs to the NDK family. Homotetramer. Mg(2+) is required as a cofactor.

The protein resides in the cytoplasm. It catalyses the reaction a 2'-deoxyribonucleoside 5'-diphosphate + ATP = a 2'-deoxyribonucleoside 5'-triphosphate + ADP. The enzyme catalyses a ribonucleoside 5'-diphosphate + ATP = a ribonucleoside 5'-triphosphate + ADP. In terms of biological role, major role in the synthesis of nucleoside triphosphates other than ATP. The ATP gamma phosphate is transferred to the NDP beta phosphate via a ping-pong mechanism, using a phosphorylated active-site intermediate. This chain is Nucleoside diphosphate kinase, found in Shewanella sp. (strain MR-4).